A 584-amino-acid polypeptide reads, in one-letter code: Aspartate--tRNA(Asp/Asn) ligase (584 aa).

Glu177 is an L-aspartate binding site. The segment at 201-204 (QLFK) is aspartate. Residue Arg223 coordinates L-aspartate. Residues 223–225 (RDE) and Gln232 each bind ATP. An L-aspartate-binding site is contributed by His447. Glu481 provides a ligand contact to ATP. Arg488 contacts L-aspartate. 533–536 (GLDR) provides a ligand contact to ATP.

Belongs to the class-II aminoacyl-tRNA synthetase family. Type 1 subfamily. As to quaternary structure, homodimer.

It localises to the cytoplasm. The enzyme catalyses tRNA(Asx) + L-aspartate + ATP = L-aspartyl-tRNA(Asx) + AMP + diphosphate. Functionally, aspartyl-tRNA synthetase with relaxed tRNA specificity since it is able to aspartylate not only its cognate tRNA(Asp) but also tRNA(Asn). Reaction proceeds in two steps: L-aspartate is first activated by ATP to form Asp-AMP and then transferred to the acceptor end of tRNA(Asp/Asn). The protein is Aspartate--tRNA(Asp/Asn) ligase of Chlamydia pneumoniae (Chlamydophila pneumoniae).